The sequence spans 67 residues: Metallothionein-B (67 aa).

The protein belongs to the metallothionein superfamily. Type 4 family.

In terms of biological role, metallothioneins have a high content of cysteine residues that bind various heavy metals. The sequence is that of Metallothionein-B from Sphaerechinus granularis (Purple sea urchin).